The sequence spans 321 residues: uncharacterized protein (321 aa).

A disordered region spans residues 280–306 (NSDHINNENNTNSNNDDNSNNSNNNNE). The span at 286–306 (NENNTNSNNDDNSNNSNNNNE) shows a compositional bias: low complexity.

This is an uncharacterized protein from Dictyostelium discoideum (Social amoeba).